Consider the following 226-residue polypeptide: Leucyl/phenylalanyl-tRNA--protein transferase (226 aa).

It belongs to the L/F-transferase family.

The protein resides in the cytoplasm. It catalyses the reaction N-terminal L-lysyl-[protein] + L-leucyl-tRNA(Leu) = N-terminal L-leucyl-L-lysyl-[protein] + tRNA(Leu) + H(+). The catalysed reaction is N-terminal L-arginyl-[protein] + L-leucyl-tRNA(Leu) = N-terminal L-leucyl-L-arginyl-[protein] + tRNA(Leu) + H(+). The enzyme catalyses L-phenylalanyl-tRNA(Phe) + an N-terminal L-alpha-aminoacyl-[protein] = an N-terminal L-phenylalanyl-L-alpha-aminoacyl-[protein] + tRNA(Phe). Functions in the N-end rule pathway of protein degradation where it conjugates Leu, Phe and, less efficiently, Met from aminoacyl-tRNAs to the N-termini of proteins containing an N-terminal arginine or lysine. This chain is Leucyl/phenylalanyl-tRNA--protein transferase, found in Ectopseudomonas mendocina (strain ymp) (Pseudomonas mendocina).